Reading from the N-terminus, the 159-residue chain is Transcriptional repressor NrdR (159 aa).

A zinc finger lies at 3 to 34; the sequence is CPFCRHEDTQVVDSRVSEDGAAIRRRRRCSAC. Residues 49–139 enclose the ATP-cone domain; that stretch reads PAVVKKDGSR…VYRRFEDVSE (91 aa).

This sequence belongs to the NrdR family. The cofactor is Zn(2+).

Negatively regulates transcription of bacterial ribonucleotide reductase nrd genes and operons by binding to NrdR-boxes. This chain is Transcriptional repressor NrdR, found in Burkholderia vietnamiensis (strain G4 / LMG 22486) (Burkholderia cepacia (strain R1808)).